The primary structure comprises 344 residues: MHNKNNTILQTIKGEKTSHTPVWFMRQAGRSQPEYRKLKEKYSLFDITHQPELCAYVTQLPVDNYNTDAAVLYKDIMTPLKPIGVDVDIKSGIGPVISNPIKSVSDVDKLTQIDPKRDVPYVLETIQLLTQEKLNVPLIGFTGAPFTLASYMIEGGPSKNYNYTKAMMYGDEATWFALMNHLVQVSIDYVVAQVEAGAELIQIFDSWVGALNVQDYRYYIKPSMDKLINGIKAKYDVPVIMFGVGASHLINEWNDLAIDVLGLDWRTSISSATKMGVNKTLQGNLDPSLLLAPWDVIEQRVREILDEGMERGKHIFNLGHGVFPEVQPDTLKRVTQFVHDYTSK.

Residues 26–30 (RQAGR), F45, D75, Y151, S206, and H320 contribute to the substrate site.

It belongs to the uroporphyrinogen decarboxylase family. Homodimer.

The protein localises to the cytoplasm. It carries out the reaction uroporphyrinogen III + 4 H(+) = coproporphyrinogen III + 4 CO2. Its pathway is porphyrin-containing compound metabolism; protoporphyrin-IX biosynthesis; coproporphyrinogen-III from 5-aminolevulinate: step 4/4. In terms of biological role, catalyzes the decarboxylation of four acetate groups of uroporphyrinogen-III to yield coproporphyrinogen-III. The polypeptide is Uroporphyrinogen decarboxylase (Staphylococcus haemolyticus (strain JCSC1435)).